Reading from the N-terminus, the 522-residue chain is Protein GDS1 (522 aa).

4 disordered regions span residues 56–88 (ALDD…PKKD), 222–268 (QQLE…SSNS), 300–391 (LSPS…SHNA), and 433–489 (STQT…SRNE). A compositionally biased stretch (polar residues) spans 62–73 (LAGSSFSSSQEI). Residues 74–88 (KATKPKKDFGAPKKD) show a composition bias toward basic and acidic residues. Polar residues-rich tracts occupy residues 222–236 (QQLE…FNSN), 244–260 (SSNQ…SMTD), 300–314 (LSPS…LLTP), and 355–366 (SQSLSVLSTPKK). Over residues 368-378 (SSASLSTFASS) the composition is skewed to low complexity. The segment covering 379–391 (KNISPDSSLSHNA) has biased composition (polar residues). Low complexity predominate over residues 439 to 467 (ESSSESSQYNSSSSSPVNSAAASSAESLS). The span at 468 to 489 (DINSSQDNGRESNPSSQESRNE) shows a compositional bias: polar residues.

In terms of biological role, involved in nuclear control of mitochondria. This chain is Protein GDS1 (GDS1), found in Saccharomyces cerevisiae (strain ATCC 204508 / S288c) (Baker's yeast).